We begin with the raw amino-acid sequence, 217 residues long: Uracil-DNA glycosylase (217 aa).

The Proton acceptor role is filled by aspartate 62.

The protein belongs to the uracil-DNA glycosylase (UDG) superfamily. UNG family.

Its subcellular location is the cytoplasm. It carries out the reaction Hydrolyzes single-stranded DNA or mismatched double-stranded DNA and polynucleotides, releasing free uracil.. Functionally, excises uracil residues from the DNA which can arise as a result of misincorporation of dUMP residues by DNA polymerase or due to deamination of cytosine. In Streptococcus pneumoniae (strain P1031), this protein is Uracil-DNA glycosylase.